A 703-amino-acid polypeptide reads, in one-letter code: MAKRDYFCFVVLFLSSVSAVIDDPQNKQVYVVYMGSLPSLLEYTPLSHHMSILQEVTGDSSVEGRLVRSYKRSFNGFAARLTESERIRVAEMEGVVSVFPNINYKLQTTASWDFLGLKEGKNTKRNLAIESDTIIGFIDSGIWPESESFSDKGFGPPPKKWKGVCSGGKNFTCNNKLIGARDYTSEGTRDLQGHGTHTASTAAGNAVADASFFGIGNGTARGGVPASRIAAYKVCSEKDCTAASLLSAFDDAIADGVDLISISLASEFPQKYYKDAIAIGAFHANVKGILTVNSAGNSGSFPSTTASVAPWILSVAASNTNRGFFTKVVLGNGKTLVGRSVNSFDLKGKKYPLVYGDNFNESLVQGKILVSKFPTSSKVAVGSILIDDYQHYALLSSKPFSLLPPDDFDSLVSYINSTRSPQGTFLKTEAFFNQTAPTVASFSSRGPNFIAVDLLKPDISAPGVEILAAYSPLGSPSEEESDKRRVKYSVMSGTSMSCPHVAGVAAYIRTFHPKWSPSVIQSAIMTTAWPMKPNRPGFASTEFAYGAGHVDQIAAINPGLVYELDKADHIAFLCGLNYTSKTLHLIAGEAVTCSGNTLPRNLNYPSMSAKIDGYNSSFTVTFKRTVTNLGTPNSTYKSKIVLNHGAKLVKVSPSVLSFKRVNEKQSFTVTFSGNLNLNLPTSANLIWSDGTHNVRSVIVVYTT.

A signal peptide spans 1 to 19 (MAKRDYFCFVVLFLSSVSA). Residues 20–107 (VIDDPQNKQV…VFPNINYKLQ (88 aa)) constitute a propeptide, activation peptide. The Inhibitor I9 domain maps to 29-106 (VYVVYMGSLP…SVFPNINYKL (78 aa)). The Peptidase S8 domain occupies 111–556 (SWDFLGLKEG…AGHVDQIAAI (446 aa)). Asp-139 acts as the Charge relay system in catalysis. Asn-170 carries N-linked (GlcNAc...) asparagine glycosylation. Catalysis depends on His-194, which acts as the Charge relay system. Residues Asn-217, Asn-360, Asn-416, and Asn-433 are each glycosylated (N-linked (GlcNAc...) asparagine). Positions 350–411 (KYPLVYGDNF…LLPPDDFDSL (62 aa)) constitute a PA domain. The Charge relay system role is filled by Ser-495. Asn-577, Asn-615, and Asn-633 each carry an N-linked (GlcNAc...) asparagine glycan.

Belongs to the peptidase S8 family. The C-terminal propeptide is autocleaved.

The protein localises to the secreted. The chain is Subtilisin-like protease SBT4.7 from Arabidopsis thaliana (Mouse-ear cress).